A 91-amino-acid polypeptide reads, in one-letter code: ATP-dependent Clp protease adapter protein ClpS (91 aa).

It belongs to the ClpS family. As to quaternary structure, binds to the N-terminal domain of the chaperone ClpA.

Its function is as follows. Involved in the modulation of the specificity of the ClpAP-mediated ATP-dependent protein degradation. This Synechococcus sp. (strain ATCC 27144 / PCC 6301 / SAUG 1402/1) (Anacystis nidulans) protein is ATP-dependent Clp protease adapter protein ClpS.